The primary structure comprises 688 residues: Eukaryotic translation initiation factor 3 subunit B (688 aa).

The tract at residues 1–28 (MAKKKGDQYDSDGAEDQDYDEEPVFEDP) is disordered. The span at 9 to 25 (YDSDGAEDQDYDEEPVF) shows a compositional bias: acidic residues. In terms of domain architecture, RRM spans 57–141 (NVIVVDNIPV…HTLLVNLFSD (85 aa)). 6 WD repeats span residues 208-246 (RERF…KINK), 247-287 (FAHS…EKRS), 291-329 (DGSS…LLDK), 332-367 (IKVQ…TLLE), 440-482 (EVKE…EPTM), and 527-572 (GDHY…KRVN). A coiled-coil region spans residues 612–643 (DRVRMTRASKELLEKRAKLREQFVEYRAKRVN).

The protein belongs to the eIF-3 subunit B family. In terms of assembly, component of the eukaryotic translation initiation factor 3 (eIF-3) complex.

It is found in the cytoplasm. Its function is as follows. RNA-binding component of the eukaryotic translation initiation factor 3 (eIF-3) complex, which is involved in protein synthesis of a specialized repertoire of mRNAs and, together with other initiation factors, stimulates binding of mRNA and methionyl-tRNAi to the 40S ribosome. The eIF-3 complex specifically targets and initiates translation of a subset of mRNAs involved in cell proliferation. In Culex quinquefasciatus (Southern house mosquito), this protein is Eukaryotic translation initiation factor 3 subunit B.